The following is a 351-amino-acid chain: Cell cycle control protein 50B (351 aa).

The Cytoplasmic segment spans residues 1–33 (MTWSATARGAHQPDNTAFTQQRLPAWQPLLSAS). The helical transmembrane segment at 34–54 (IALPLFFCAGLAFIGLGLGLY) threads the bilayer. The Exoplasmic loop portion of the chain corresponds to 55 to 315 (YSSNGIKELE…SISWMGGKNP (261 aa)). Asn-75, Asn-213, and Asn-286 each carry an N-linked (GlcNAc...) asparagine glycan. The helical transmembrane segment at 316–336 (FLGIAYLVVGSLCILTGFVML) threads the bilayer. At 337 to 351 (VVYIRYQDQDDDDEE) the chain is on the cytoplasmic side.

The protein belongs to the CDC50/LEM3 family. Component of a P4-ATPase flippase complex which consists of a catalytic alpha subunit and an accessory beta subunit. Interacts with alpha subunits ATP8A1, ATP8B1, ATP8B2 and ATP8B4.

Its subcellular location is the cell membrane. In terms of biological role, accessory component of a P4-ATPase flippase complex which catalyzes the hydrolysis of ATP coupled to the transport of aminophospholipids from the outer to the inner leaflet of various membranes and ensures the maintenance of asymmetric distribution of phospholipids. Phospholipid translocation also seems to be implicated in vesicle formation and in uptake of lipid signaling molecules. The beta subunit may assist in binding of the phospholipid substrate. Can mediate the export of alpha subunits ATP8A1, ATP8B1, ATP8B2 and ATP8B4 from the ER to the plasma membrane. The sequence is that of Cell cycle control protein 50B (TMEM30B) from Homo sapiens (Human).